The sequence spans 126 residues: Large ribosomal subunit protein bL12 (126 aa).

It belongs to the bacterial ribosomal protein bL12 family. In terms of assembly, homodimer. Part of the ribosomal stalk of the 50S ribosomal subunit. Forms a multimeric L10(L12)X complex, where L10 forms an elongated spine to which 2 to 4 L12 dimers bind in a sequential fashion. Binds GTP-bound translation factors.

Forms part of the ribosomal stalk which helps the ribosome interact with GTP-bound translation factors. Is thus essential for accurate translation. The chain is Large ribosomal subunit protein bL12 from Citrifermentans bemidjiense (strain ATCC BAA-1014 / DSM 16622 / JCM 12645 / Bem) (Geobacter bemidjiensis).